The primary structure comprises 609 residues: UvrABC system protein C (609 aa).

Positions 16–94 (HLPGVYRHLD…IKSLRPRYNI (79 aa)) constitute a GIY-YIG domain. A UVR domain is found at 203–238 (REVMDEIEARMLQASTELRFEEAAVLRDQMGSLSKV).

It belongs to the UvrC family. Interacts with UvrB in an incision complex.

It is found in the cytoplasm. The UvrABC repair system catalyzes the recognition and processing of DNA lesions. UvrC both incises the 5' and 3' sides of the lesion. The N-terminal half is responsible for the 3' incision and the C-terminal half is responsible for the 5' incision. The sequence is that of UvrABC system protein C from Bordetella pertussis (strain Tohama I / ATCC BAA-589 / NCTC 13251).